Reading from the N-terminus, the 514-residue chain is Histidine ammonia-lyase (514 aa).

A cross-link (5-imidazolinone (Ala-Gly)) is located at residues 142 to 144; sequence ASG. Ser-143 is subject to 2,3-didehydroalanine (Ser).

The protein belongs to the PAL/histidase family. Post-translationally, contains an active site 4-methylidene-imidazol-5-one (MIO), which is formed autocatalytically by cyclization and dehydration of residues Ala-Ser-Gly.

The protein resides in the cytoplasm. It catalyses the reaction L-histidine = trans-urocanate + NH4(+). It participates in amino-acid degradation; L-histidine degradation into L-glutamate; N-formimidoyl-L-glutamate from L-histidine: step 1/3. The polypeptide is Histidine ammonia-lyase (Sorangium cellulosum (strain So ce56) (Polyangium cellulosum (strain So ce56))).